A 131-amino-acid polypeptide reads, in one-letter code: DNA-directed RNA polymerase subunit omega (131 aa).

The segment at 78–131 (DEPEAEAVPALSSAPDAAQSDAMGDVQFDRMTEEDLLRGLEGLVPPAATDDDGE) is disordered. Over residues 104–115 (QFDRMTEEDLLR) the composition is skewed to basic and acidic residues.

The protein belongs to the RNA polymerase subunit omega family. As to quaternary structure, the RNAP catalytic core consists of 2 alpha, 1 beta, 1 beta' and 1 omega subunit. When a sigma factor is associated with the core the holoenzyme is formed, which can initiate transcription.

It catalyses the reaction RNA(n) + a ribonucleoside 5'-triphosphate = RNA(n+1) + diphosphate. Promotes RNA polymerase assembly. Latches the N- and C-terminal regions of the beta' subunit thereby facilitating its interaction with the beta and alpha subunits. This Beijerinckia indica subsp. indica (strain ATCC 9039 / DSM 1715 / NCIMB 8712) protein is DNA-directed RNA polymerase subunit omega.